A 606-amino-acid polypeptide reads, in one-letter code: Arginine--tRNA ligase (606 aa).

A 'HIGH' region motif is present at residues 126 to 136 (PNTNKPLHLGH).

The protein belongs to the class-I aminoacyl-tRNA synthetase family. In terms of assembly, monomer.

The protein resides in the cytoplasm. The catalysed reaction is tRNA(Arg) + L-arginine + ATP = L-arginyl-tRNA(Arg) + AMP + diphosphate. This chain is Arginine--tRNA ligase, found in Phocaeicola vulgatus (strain ATCC 8482 / DSM 1447 / JCM 5826 / CCUG 4940 / NBRC 14291 / NCTC 11154) (Bacteroides vulgatus).